The following is a 120-amino-acid chain: Large ribosomal subunit protein uL18 (120 aa).

It belongs to the universal ribosomal protein uL18 family. As to quaternary structure, part of the 50S ribosomal subunit; part of the 5S rRNA/L5/L18/L25 subcomplex. Contacts the 5S and 23S rRNAs.

In terms of biological role, this is one of the proteins that bind and probably mediate the attachment of the 5S RNA into the large ribosomal subunit, where it forms part of the central protuberance. In Bartonella bacilliformis (strain ATCC 35685 / KC583 / Herrer 020/F12,63), this protein is Large ribosomal subunit protein uL18.